We begin with the raw amino-acid sequence, 200 residues long: Serine/threonine-protein kinase mos (200 aa).

A Protein kinase domain is found at 2 to 200; the sequence is LCLLQPLGSG…ELLKGERVTA (199 aa). ATP contacts are provided by residues 8 to 16 and lysine 29; that span reads LGSGGFGSV. The active-site Proton acceptor is the aspartate 143.

The protein belongs to the protein kinase superfamily. Ser/Thr protein kinase family.

It carries out the reaction L-seryl-[protein] + ATP = O-phospho-L-seryl-[protein] + ADP + H(+). It catalyses the reaction L-threonyl-[protein] + ATP = O-phospho-L-threonyl-[protein] + ADP + H(+). The sequence is that of Serine/threonine-protein kinase mos (MOS) from Ciconia nigra (Black stork).